Consider the following 146-residue polypeptide: Holo-[acyl-carrier-protein] synthase (146 aa).

The Mg(2+) site is built by D9 and E63.

This sequence belongs to the P-Pant transferase superfamily. AcpS family. Requires Mg(2+) as cofactor.

It is found in the cytoplasm. The enzyme catalyses apo-[ACP] + CoA = holo-[ACP] + adenosine 3',5'-bisphosphate + H(+). Functionally, transfers the 4'-phosphopantetheine moiety from coenzyme A to a Ser of acyl-carrier-protein. The protein is Holo-[acyl-carrier-protein] synthase of Burkholderia orbicola (strain MC0-3).